Consider the following 234-residue polypeptide: Ribonuclease HII (234 aa).

The region spanning 47–234 (IRIAGVDEVG…KTVHKILYQE (188 aa)) is the RNase H type-2 domain. D53, E54, and D144 together coordinate a divalent metal cation.

This sequence belongs to the RNase HII family. Mn(2+) serves as cofactor. Mg(2+) is required as a cofactor.

Its subcellular location is the cytoplasm. It catalyses the reaction Endonucleolytic cleavage to 5'-phosphomonoester.. Endonuclease that specifically degrades the RNA of RNA-DNA hybrids. In Ruegeria pomeroyi (strain ATCC 700808 / DSM 15171 / DSS-3) (Silicibacter pomeroyi), this protein is Ribonuclease HII.